The sequence spans 286 residues: Beta-lactamase SHV-2 (286 aa).

Positions 1–21 are cleaved as a signal peptide; the sequence is MRYIRLCIISLLATLPLAVHA. Ser66 (acyl-ester intermediate) is an active-site residue. Cys73 and Cys119 are joined by a disulfide. Glu164 acts as the Proton acceptor in catalysis. Residue 230-232 participates in substrate binding; it reads KTG.

The protein belongs to the class-A beta-lactamase family.

It catalyses the reaction a beta-lactam + H2O = a substituted beta-amino acid. Its function is as follows. This enzyme hydrolyzes cefotaxime, ceftazidime and other broad spectrum cephalosporins. This chain is Beta-lactamase SHV-2 (bla), found in Escherichia coli.